We begin with the raw amino-acid sequence, 159 residues long: Phospholipase A2 AP-PLA2-I (159 aa).

Positions 1–19 (MNFLVVIVTTVSLAGAASA) are cleaved as a signal peptide. A propeptide spanning residues 20 to 23 (GEIQ) is cleaved from the precursor. Cystine bridges form between C51/C159, C53/C69, C68/C139, C75/C132, C85/C125, and C110/C130. Ca(2+) contacts are provided by Y52, G54, and G56. Residue H72 is part of the active site. D73 contributes to the Ca(2+) binding site. Residue D133 is part of the active site.

It belongs to the phospholipase A2 family. Group I subfamily. In terms of assembly, homodimer. Requires Ca(2+) as cofactor. As to expression, expressed by the venom gland.

The protein resides in the secreted. The catalysed reaction is a 1,2-diacyl-sn-glycero-3-phosphocholine + H2O = a 1-acyl-sn-glycero-3-phosphocholine + a fatty acid + H(+). Its function is as follows. Starfish phospholipase A2 (PLA2) that has hemorrhagic and capillary permeability-increasing activities and hence is considered to be deeply involved in the local inflammation. Shows hemolytic activity only in the presence of phosphatidylcholine (PC). PLA2 catalyzes the calcium-dependent hydrolysis of the 2-acyl groups in 3-sn-phosphoglycerides. This Acanthaster planci (Crown-of-thorns starfish) protein is Phospholipase A2 AP-PLA2-I.